A 472-amino-acid chain; its full sequence is Na(+)/H(+) antiporter NhaA 1 (472 aa).

Transmembrane regions (helical) follow at residues 34–54 (TASITLLLAAIAAMVIANSQW), 86–106 (GLMVLFFFLLGLEIKYECLVG), 116–136 (LVIAMAIGGMLLPAGIYAGVA), 146–166 (GWGIPMATDTAFALGILALLG), 175–195 (VTLSALAIVDDMGAVAVIGLF), 203–223 (TSLMYAGLTLGGLFALNVLGF), 227–247 (IFYLVGGILLWWFVLQSGVHA), 324–344 (PVSLIILPIFAFINAGVALPD), 353–373 (VVFIGVASAMVLGKVIGISVF), 394–414 (VFALACLAGVGFTMSLFIASL), and 428–448 (LGILAGSVIAAIIGTTLFLMI).

This sequence belongs to the NhaA Na(+)/H(+) (TC 2.A.33) antiporter family.

The protein resides in the cell inner membrane. It catalyses the reaction Na(+)(in) + 2 H(+)(out) = Na(+)(out) + 2 H(+)(in). Its function is as follows. Na(+)/H(+) antiporter that extrudes sodium in exchange for external protons. The chain is Na(+)/H(+) antiporter NhaA 1 from Pseudoalteromonas atlantica (strain T6c / ATCC BAA-1087).